Consider the following 249-residue polypeptide: Small ribosomal subunit protein uS2 (249 aa).

This sequence belongs to the universal ribosomal protein uS2 family.

The chain is Small ribosomal subunit protein uS2 from Bordetella avium (strain 197N).